The primary structure comprises 303 residues: ATP synthase gamma chain (303 aa).

Belongs to the ATPase gamma chain family. As to quaternary structure, F-type ATPases have 2 components, CF(1) - the catalytic core - and CF(0) - the membrane proton channel. CF(1) has five subunits: alpha(3), beta(3), gamma(1), delta(1), epsilon(1). CF(0) has three main subunits: a, b and c.

The protein resides in the cell inner membrane. Its function is as follows. Produces ATP from ADP in the presence of a proton gradient across the membrane. The gamma chain is believed to be important in regulating ATPase activity and the flow of protons through the CF(0) complex. The sequence is that of ATP synthase gamma chain from Elusimicrobium minutum (strain Pei191).